Here is a 3013-residue protein sequence, read N- to C-terminus: DmX-like protein 1 (3013 aa).

WD repeat units follow at residues 108–145 (FLDSIAHNITWDPAGNRLLTGSSCLQLWCNSRKQTEDE), 164–204 (KTAS…RPAV), and 227–275 (AHPR…NDCF). Phosphoserine occurs at positions 322, 420, 423, and 434. Residues 418-442 (PSSEASVEDSIQADLKSDEELDDGV) form a disordered region. The stretch at 474–514 (DHQIEVLLSEWSKNADMLFSIHPMDGSLLVWHVDWLDEYQP) is one WD 4 repeat. Position 572 is a phosphoserine (serine 572). 2 WD repeats span residues 578–619 (AHSK…ESAF) and 842–893 (KKRL…TPVS). Residues serine 916 and serine 922 each carry the phosphoserine modification. 3 WD repeats span residues 970-1008 (HLSSSSIYPVCSAPYLLATSCSDDKVRFWRCRVTNGESA), 1145-1193 (EDGS…PLSK), and 1208-1248 (GAPP…EPVI). Residues serine 1829, serine 1896, serine 1903, and serine 1965 each carry the phosphoserine modification. 2 disordered regions span residues 2364–2406 (GQAN…PPAV) and 2431–2462 (QSRAEYDSEESLESDDEEEEDDDDALPSGLQL). Residues 2385–2398 (SKVSARESPVSSSS) are compositionally biased toward low complexity. Positions 2437-2455 (DSEESLESDDEEEEDDDDA) are enriched in acidic residues. WD repeat units follow at residues 2728–2769 (KAIN…TCFR), 2771–2810 (GGNSRITRMRFNYQGNKFGIVDADGYLSLYQTNWKCCPVT), 2822–2864 (CHNK…ANSL), 2870–2909 (CHDSGATVLAYAPKHQLLISGGRKGFTCIFDLRQRQQRQL), 2912–2951 (SHDSPVKAIAIDPTEEYFVTGSAEGNIKIWSLSSFSLLHT), and 2964–3002 (NIGTGVMQIETGPANHIFSCGADGTMKMRILPDQFSPLN).

The sequence is that of DmX-like protein 1 (Dmxl1) from Mus musculus (Mouse).